Consider the following 331-residue polypeptide: Ornithine carbamoyltransferase (331 aa).

Residues 55-58 (STRT), glutamine 82, arginine 106, and 133-136 (HPTQ) contribute to the carbamoyl phosphate site. Residues asparagine 166, aspartate 230, and 234–235 (SM) contribute to the L-ornithine site. Carbamoyl phosphate contacts are provided by residues 272 to 273 (CL) and arginine 317.

It belongs to the aspartate/ornithine carbamoyltransferase superfamily. OTCase family.

The protein localises to the cytoplasm. The catalysed reaction is carbamoyl phosphate + L-ornithine = L-citrulline + phosphate + H(+). It functions in the pathway amino-acid biosynthesis; L-arginine biosynthesis; L-arginine from L-ornithine and carbamoyl phosphate: step 1/3. In terms of biological role, reversibly catalyzes the transfer of the carbamoyl group from carbamoyl phosphate (CP) to the N(epsilon) atom of ornithine (ORN) to produce L-citrulline. This is Ornithine carbamoyltransferase from Neisseria meningitidis serogroup C / serotype 2a (strain ATCC 700532 / DSM 15464 / FAM18).